The sequence spans 661 residues: Methyl-accepting chemotaxis protein McpA (661 aa).

Residues 1–16 are Cytoplasmic-facing; the sequence is MKKILQLIKQRSITRK. Residues 17 to 37 form a helical membrane-spanning segment; that stretch reads LLVSFLSILIIPVVILAIFAY. Over 38–281 the chain is Extracellular; it reads QSASSSLDRQ…IHEAAQPVLH (244 aa). The region spanning 152-228 is the Cache domain; sequence ITDPYKTAST…QSGTELKGDW (77 aa). Residues 282–302 traverse the membrane as a helical segment; that stretch reads LALIVLAAAIIIGIIVMTLII. Residues 303–355 form the HAMP domain; that stretch reads RSITTPLKQLVGSSKRISEGDLTETIDIRSKDELGELGKSFNNMASSLRSLIH. The Cytoplasmic segment spans residues 303–661; the sequence is RSITTPLKQL…RDMTKRFKIE (359 aa). Residue glutamate 370 is modified to Glutamate methyl ester (Glu). Positions 374-610 constitute a Methyl-accepting transducer domain; sequence SAAQTSKATE…EVSGASEHIA (237 aa). Glutamine 593 and glutamine 594 each carry deamidated glutamine. A Glutamate methyl ester (Gln) modification is found at glutamine 594. Glutamate 629 and glutamate 636 each carry glutamate methyl ester (Glu).

This sequence belongs to the methyl-accepting chemotaxis (MCP) protein family. As to quaternary structure, interacts with FloT. In terms of processing, deamidated by CheD on Gln-593 and Gln-594, producing glutamate residues. The glutamate residues are then methylated. Other additional sites are deamidated and methylated as well.

The protein localises to the cell membrane. It localises to the membrane raft. Its function is as follows. Chemotactic-signal transducers respond to changes in the concentration of attractants and repellents in the environment, transduce a signal from the outside to the inside of the cell, and facilitate sensory adaptation through the variation of the level of methylation. All amino acids serve as attractants in B.subtilis, they appear to cause an increase in the turnover methyl groups, leading to methylation of an unidentified acceptor, while repellents have been shown to cause a decrease in methyl group turnover. The methyl groups are added by a methyltransferase and removed by a methylesterase. McpA is required for taxis towards glucose and alpha-methylglucoside. This is Methyl-accepting chemotaxis protein McpA (mcpA) from Bacillus subtilis (strain 168).